The sequence spans 95 residues: UPF0473 protein ABC1595 (95 aa).

Belongs to the UPF0473 family.

The polypeptide is UPF0473 protein ABC1595 (Shouchella clausii (strain KSM-K16) (Alkalihalobacillus clausii)).